A 90-amino-acid chain; its full sequence is Small ribosomal subunit protein bS20 (90 aa).

Basic and acidic residues predominate over residues 1-11; that stretch reads MANIKSSEKDI. 2 disordered regions span residues 1 to 29 and 69 to 90; these read MANI…SRLR and SKNA…SAAA.

Belongs to the bacterial ribosomal protein bS20 family.

Binds directly to 16S ribosomal RNA. The chain is Small ribosomal subunit protein bS20 from Leptospira borgpetersenii serovar Hardjo-bovis (strain L550).